The following is a 389-amino-acid chain: N-terminal EF-hand calcium-binding protein 2 (389 aa).

At Arg-10 the chain carries Omega-N-methylarginine. Position 42 is an asymmetric dimethylarginine (Arg-42). 2 EF-hand domains span residues 63–98 and 99–132; these read GGTA…GVLN and EKEL…HMGD. Residues Asp-76, Asn-78, Asp-80, Lys-82, Glu-87, Asp-110, Asp-112, Thr-114, His-116, and Glu-121 each contribute to the Ca(2+) site. Residues 173-198 are a coiled coil; sequence LKETANQIQSLLSSVESAVEAIEEQT. Residues 289 to 377 form the ABM domain; sequence QLVRQEMAVC…LSQPEALSQI (89 aa).

As to quaternary structure, interacts (calcium-dependent) with ADORA2A and GRM5. Expressed in the iris, in the ciliary margin of the retina and in the inner portion of the neural retina. Expressed in the spinal dorsal horn with especially strong expression in lamina IIi; found in excitory synaptic boutons (at protein level).

The protein localises to the cytoplasm. The protein resides in the cell projection. It is found in the dendrite. It localises to the axon. Its subcellular location is the cell membrane. May act as a signaling scaffold protein that senses intracellular calcium. Can modulate ligand-induced internalization of ADORA2A and coupling efficiency of mGluR5/GRM5; for both receptors may regulate signaling activity such as promoting MAPK1/3 (ERK1/2) activation. The polypeptide is N-terminal EF-hand calcium-binding protein 2 (Necab2) (Mus musculus (Mouse)).